A 391-amino-acid polypeptide reads, in one-letter code: Dual-specificity RNA methyltransferase RlmN (391 aa).

The disordered stretch occupies residues 1-20 (MTSVVADSLTETKTDSQKPI). Residues 10–20 (TETKTDSQKPI) show a composition bias toward basic and acidic residues. The Proton acceptor role is filled by Glu120. The region spanning 126 to 366 (DADRGTLCIS…APVRRTRGQD (241 aa)) is the Radical SAM core domain. A disulfide bond links Cys133 and Cys371. Positions 140, 144, and 147 each coordinate [4Fe-4S] cluster. S-adenosyl-L-methionine-binding positions include 195–196 (GE), Ser227, 249–251 (SLH), and Asn328. Catalysis depends on Cys371, which acts as the S-methylcysteine intermediate.

Belongs to the radical SAM superfamily. RlmN family. The cofactor is [4Fe-4S] cluster.

The protein resides in the cytoplasm. The catalysed reaction is adenosine(2503) in 23S rRNA + 2 reduced [2Fe-2S]-[ferredoxin] + 2 S-adenosyl-L-methionine = 2-methyladenosine(2503) in 23S rRNA + 5'-deoxyadenosine + L-methionine + 2 oxidized [2Fe-2S]-[ferredoxin] + S-adenosyl-L-homocysteine. It carries out the reaction adenosine(37) in tRNA + 2 reduced [2Fe-2S]-[ferredoxin] + 2 S-adenosyl-L-methionine = 2-methyladenosine(37) in tRNA + 5'-deoxyadenosine + L-methionine + 2 oxidized [2Fe-2S]-[ferredoxin] + S-adenosyl-L-homocysteine. Specifically methylates position 2 of adenine 2503 in 23S rRNA and position 2 of adenine 37 in tRNAs. m2A2503 modification seems to play a crucial role in the proofreading step occurring at the peptidyl transferase center and thus would serve to optimize ribosomal fidelity. In Zymomonas mobilis subsp. mobilis (strain ATCC 31821 / ZM4 / CP4), this protein is Dual-specificity RNA methyltransferase RlmN.